The chain runs to 326 residues: uncharacterized protein (326 aa).

This sequence belongs to the ParB family.

This is an uncharacterized protein from Acidianus two-tailed virus (ATV).